A 247-amino-acid chain; its full sequence is Uridylate kinase (247 aa).

Lys15 to Gly18 serves as a coordination point for ATP. Positions Gly23–Gly28 are involved in allosteric activation by GTP. Gly57 provides a ligand contact to UMP. Residues Gly58 and Arg62 each contribute to the ATP site. UMP is bound by residues Asp77 and Thr138–Thr145. ATP-binding residues include Thr165, Tyr171, and Asp174.

It belongs to the UMP kinase family. In terms of assembly, homohexamer.

Its subcellular location is the cytoplasm. The catalysed reaction is UMP + ATP = UDP + ADP. It participates in pyrimidine metabolism; CTP biosynthesis via de novo pathway; UDP from UMP (UMPK route): step 1/1. Its activity is regulated as follows. Allosterically activated by GTP. Inhibited by UTP. Catalyzes the reversible phosphorylation of UMP to UDP. This chain is Uridylate kinase, found in Pseudoalteromonas atlantica (strain T6c / ATCC BAA-1087).